We begin with the raw amino-acid sequence, 118 residues long: Large ribosomal subunit protein bL20 (118 aa).

Belongs to the bacterial ribosomal protein bL20 family.

Its function is as follows. Binds directly to 23S ribosomal RNA and is necessary for the in vitro assembly process of the 50S ribosomal subunit. It is not involved in the protein synthesizing functions of that subunit. This Elusimicrobium minutum (strain Pei191) protein is Large ribosomal subunit protein bL20.